The primary structure comprises 475 residues: Adenosylhomocysteinase (475 aa).

The substrate site is built by Thr-63, Asp-138, and Glu-199. 200–202 (TTT) serves as a coordination point for NAD(+). Substrate-binding residues include Lys-229 and Asp-233. NAD(+) is bound by residues Asn-234, 263 to 268 (GYGDVG), Glu-286, Asn-321, 342 to 344 (IGH), and Asn-389.

Belongs to the adenosylhomocysteinase family. NAD(+) is required as a cofactor.

The protein localises to the cytoplasm. The catalysed reaction is S-adenosyl-L-homocysteine + H2O = L-homocysteine + adenosine. It functions in the pathway amino-acid biosynthesis; L-homocysteine biosynthesis; L-homocysteine from S-adenosyl-L-homocysteine: step 1/1. Its function is as follows. May play a key role in the regulation of the intracellular concentration of adenosylhomocysteine. The sequence is that of Adenosylhomocysteinase from Solibacter usitatus (strain Ellin6076).